Reading from the N-terminus, the 804-residue chain is Phenylalanine--tRNA ligase beta subunit (804 aa).

Positions 40–155 (DRGMKGVVIG…SDAPIGADAI (116 aa)) constitute a tRNA-binding domain. The region spanning 409 to 484 (QDSVVVTVTL…RLYGYDRLPA (76 aa)) is the B5 domain. 4 residues coordinate Mg(2+): D462, D468, E471, and E472. The 94-residue stretch at 710–803 (PRFPSVVRDI…VEKQFGAVLR (94 aa)) folds into the FDX-ACB domain.

It belongs to the phenylalanyl-tRNA synthetase beta subunit family. Type 1 subfamily. As to quaternary structure, tetramer of two alpha and two beta subunits. It depends on Mg(2+) as a cofactor.

The protein resides in the cytoplasm. It catalyses the reaction tRNA(Phe) + L-phenylalanine + ATP = L-phenylalanyl-tRNA(Phe) + AMP + diphosphate + H(+). This is Phenylalanine--tRNA ligase beta subunit from Geobacillus kaustophilus (strain HTA426).